The following is a 127-amino-acid chain: Large ribosomal subunit protein bL17 (127 aa).

Belongs to the bacterial ribosomal protein bL17 family. In terms of assembly, part of the 50S ribosomal subunit. Contacts protein L32.

This is Large ribosomal subunit protein bL17 from Ligilactobacillus salivarius (strain UCC118) (Lactobacillus salivarius).